The following is a 72-amino-acid chain: Osmotically-inducible lipoprotein B (72 aa).

The N-terminal stretch at methionine 1–alanine 23 is a signal peptide. A lipid anchor (N-palmitoyl cysteine) is attached at cysteine 24. Cysteine 24 carries S-diacylglycerol cysteine lipidation.

The protein resides in the cell membrane. Functionally, provides resistance to osmotic stress. May be important for stationary-phase survival. This is Osmotically-inducible lipoprotein B (osmB) from Escherichia coli O157:H7.